Here is a 319-residue protein sequence, read N- to C-terminus: Cobalamin biosynthesis protein CbiB (319 aa).

A run of 5 helical transmembrane segments spans residues 56–76, 82–102, 153–173, 204–224, and 296–316; these read VMWI…LALA, WLGW…RSLA, VDGI…LAMA, VANY…AGLC, and LMWG…CWLS.

It belongs to the CobD/CbiB family.

It is found in the cell membrane. It functions in the pathway cofactor biosynthesis; adenosylcobalamin biosynthesis. Functionally, converts cobyric acid to cobinamide by the addition of aminopropanol on the F carboxylic group. However, the true cosubstrate could be (R)-1-amino-2-propanol O-2-phosphate, leading to cobinamide phosphate. The sequence is that of Cobalamin biosynthesis protein CbiB from Salmonella arizonae (strain ATCC BAA-731 / CDC346-86 / RSK2980).